We begin with the raw amino-acid sequence, 309 residues long: 4-hydroxy-3-methylbut-2-enyl diphosphate reductase (309 aa).

[4Fe-4S] cluster is bound at residue Cys12. (2E)-4-hydroxy-3-methylbut-2-enyl diphosphate is bound by residues His41 and His74. Residues His41 and His74 each coordinate dimethylallyl diphosphate. Positions 41 and 74 each coordinate isopentenyl diphosphate. Cys96 provides a ligand contact to [4Fe-4S] cluster. A (2E)-4-hydroxy-3-methylbut-2-enyl diphosphate-binding site is contributed by His124. Residue His124 coordinates dimethylallyl diphosphate. His124 provides a ligand contact to isopentenyl diphosphate. Glu126 acts as the Proton donor in catalysis. Thr167 contacts (2E)-4-hydroxy-3-methylbut-2-enyl diphosphate. Position 197 (Cys197) interacts with [4Fe-4S] cluster. The (2E)-4-hydroxy-3-methylbut-2-enyl diphosphate site is built by Ser225, Ser226, Asn227, and Ser269. Ser225, Ser226, Asn227, and Ser269 together coordinate dimethylallyl diphosphate. Isopentenyl diphosphate-binding residues include Ser225, Ser226, Asn227, and Ser269.

It belongs to the IspH family. The cofactor is [4Fe-4S] cluster.

The enzyme catalyses isopentenyl diphosphate + 2 oxidized [2Fe-2S]-[ferredoxin] + H2O = (2E)-4-hydroxy-3-methylbut-2-enyl diphosphate + 2 reduced [2Fe-2S]-[ferredoxin] + 2 H(+). It catalyses the reaction dimethylallyl diphosphate + 2 oxidized [2Fe-2S]-[ferredoxin] + H2O = (2E)-4-hydroxy-3-methylbut-2-enyl diphosphate + 2 reduced [2Fe-2S]-[ferredoxin] + 2 H(+). Its pathway is isoprenoid biosynthesis; dimethylallyl diphosphate biosynthesis; dimethylallyl diphosphate from (2E)-4-hydroxy-3-methylbutenyl diphosphate: step 1/1. The protein operates within isoprenoid biosynthesis; isopentenyl diphosphate biosynthesis via DXP pathway; isopentenyl diphosphate from 1-deoxy-D-xylulose 5-phosphate: step 6/6. Catalyzes the conversion of 1-hydroxy-2-methyl-2-(E)-butenyl 4-diphosphate (HMBPP) into a mixture of isopentenyl diphosphate (IPP) and dimethylallyl diphosphate (DMAPP). Acts in the terminal step of the DOXP/MEP pathway for isoprenoid precursor biosynthesis. The sequence is that of 4-hydroxy-3-methylbut-2-enyl diphosphate reductase from Shewanella halifaxensis (strain HAW-EB4).